The chain runs to 359 residues: Methyltransferase eqxD (359 aa).

S-adenosyl-L-methionine-binding positions include 198 to 199 (GG), aspartate 224, 248 to 249 (SF), arginine 264, and arginine 265.

Belongs to the class I-like SAM-binding methyltransferase superfamily. Cation-independent O-methyltransferase family.

The enzyme catalyses trichosetin + S-adenosyl-L-methionine = equisetin + S-adenosyl-L-homocysteine + H(+). The protein operates within mycotoxin biosynthesis. Functionally, methyltransferase; part of the gene cluster that mediates the biosynthesis of equisetin, a trans-fused decalin-containing tetramic acid with antimicrobial activity. The PKS module of eqxS together with the enoylreductase eqxC catalyze the formation of the polyketide unit which is then conjugated to L-serine by the condensation domain of the eqxS NRPS module. Activity of the Dieckmann cyclase domain (RED) results in release of the Dieckmann product intermediate. Diels-Alderase eqx3 is involved in endo-selective Diels-Alder cycloaddition to form the decalin ring, leading to the production of N-desmethylequisetin also called trichosetin. Subsequent N-methylation is carried out by eqxD to give equisetin. The protein is Methyltransferase eqxD of Fusarium heterosporum.